The following is a 358-amino-acid chain: Probable D-xylulose reductase A (358 aa).

Residues cysteine 47, histidine 72, and glutamate 73 each coordinate Zn(2+). 182-187 is a binding site for NAD(+); that stretch reads GAGPVG.

It belongs to the zinc-containing alcohol dehydrogenase family. Requires Zn(2+) as cofactor.

It carries out the reaction xylitol + NAD(+) = D-xylulose + NADH + H(+). Its pathway is carbohydrate degradation; L-arabinose degradation via L-arabinitol; D-xylulose 5-phosphate from L-arabinose (fungal route): step 4/5. Functionally, xylitol dehydrogenase which catalyzes the conversion of xylitol to D-xylulose. Xylose is a major component of hemicelluloses such as xylan. Most fungi utilize D-xylose via three enzymatic reactions, xylose reductase (XR), xylitol dehydrogenase (XDH), and xylulokinase, to form xylulose 5-phosphate, which enters pentose phosphate pathway. This Neosartorya fischeri (strain ATCC 1020 / DSM 3700 / CBS 544.65 / FGSC A1164 / JCM 1740 / NRRL 181 / WB 181) (Aspergillus fischerianus) protein is Probable D-xylulose reductase A (xdhA).